Reading from the N-terminus, the 248-residue chain is Killer cell lectin-like receptor subfamily I member 2 (248 aa).

Residues 1 to 79 lie on the Cytoplasmic side of the membrane; sequence MHKKKHIKHG…GIDPWLTTWQ (79 aa). The tract at residues 19-44 is disordered; the sequence is IGTKSPTFQEKQRPSKTDQRSTVWRE. Positions 28–44 are enriched in basic and acidic residues; it reads EKQRPSKTDQRSTVWRE. Residues 80–100 traverse the membrane as a helical; Signal-anchor for type II membrane protein segment; the sequence is MITVILATLCIILVTKVGFLI. Topologically, residues 101–248 are extracellular; the sequence is PSLFSKGEKQ…KKTYICEFNI (148 aa). 3 disulfides stabilise this stretch: cysteine 132–cysteine 145, cysteine 161–cysteine 244, and cysteine 223–cysteine 236. Residues 139-245 enclose the C-type lectin domain; the sequence is FGNNFYCVFR…CSAKKTYICE (107 aa). Residues asparagine 197, asparagine 214, and asparagine 220 are each glycosylated (N-linked (GlcNAc...) asparagine).

In terms of assembly, heterodimer with KLRE1. In terms of tissue distribution, expressed in natural killer (NK) cells.

The protein resides in the cell membrane. Lectin-like receptor for natural killer (NK) cells. Heterodimer formation with KLRE1 mediates NK cell cytolytic activity. This is Killer cell lectin-like receptor subfamily I member 2 from Mus musculus (Mouse).